The sequence spans 337 residues: Protein XAP5 CIRCADIAN TIMEKEEPER (337 aa).

Ser-2 carries the post-translational modification N-acetylserine. 2 coiled-coil regions span residues 13–41 (QDAV…KSAS) and 72–121 (TREE…GSSR). The span at 23–37 (KQREAERKKIQELKS) shows a compositional bias: basic and acidic residues. A disordered region spans residues 23-47 (KQREAERKKIQELKSKSASGNDQSG). Positions 38-47 (KSASGNDQSG) are enriched in polar residues. The disordered stretch occupies residues 125-174 (AEDFENGSDEDDGENKSSGTGNLRCGKLGKDPSVETNFLPDSEREAEEQA). Residues 126–137 (EDFENGSDEDDG) show a composition bias toward acidic residues. Phosphoserine is present on Ser-132. Residues 165 to 174 (DSEREAEEQA) are compositionally biased toward basic and acidic residues.

The protein belongs to the FAM50 family. Expressed in leaves stems, flowers, roots, trichomes and hypocotyls.

Its subcellular location is the nucleus. Its function is as follows. Involved in light regulation of the circadian clock and photomorphogenesis. May play a global role in coordinating growth in response to the light environment. Acts as a light quality sensor directing both negative and positive transcriptional regulation. Inhibits growth in red light but promote growth in blue light. Inhibits clock gene expression in diurnal cycles. Plays no role in the control of flowering time. This Arabidopsis thaliana (Mouse-ear cress) protein is Protein XAP5 CIRCADIAN TIMEKEEPER (XCT).